Reading from the N-terminus, the 1310-residue chain is Multidrug resistance protein 4 (1310 aa).

The next 5 membrane-spanning stretches (helical) occupy residues Trp48–Thr68, Met125–Val145, Lys196–Ala216, Leu223–Ala243, and Gly299–Leu319. One can recognise an ABC transmembrane type-1 1 domain in the interval Ala55–Thr368. N-linked (GlcNAc...) asparagine glycosylation is present at Asn336. Residues Val342–Pro362 traverse the membrane as a helical segment. N-linked (GlcNAc...) asparagine glycosylation occurs at Asn402. One can recognise an ABC transporter 1 domain in the interval Ile403–Arg642. Gly438–Ser445 contacts ATP. Residue Asn608 is glycosylated (N-linked (GlcNAc...) asparagine). The next 2 membrane-spanning stretches (helical) occupy residues Trp721–Phe741 and Ile773–Phe793. An ABC transmembrane type-1 2 domain is found at Phe722–Lys1030. Residue Asn816 is glycosylated (N-linked (GlcNAc...) asparagine). 3 consecutive transmembrane segments (helical) span residues Val849–Tyr869, Trp871–Asn891, and Ile945–Thr965. The ABC transporter 2 domain occupies Ile1065 to Gln1304. Residue Gly1100–Ser1107 coordinates ATP.

The protein belongs to the ABC transporter superfamily. ABCB family. Multidrug resistance exporter (TC 3.A.1.201) subfamily.

The protein resides in the membrane. The enzyme catalyses ATP + H2O + xenobioticSide 1 = ADP + phosphate + xenobioticSide 2.. Functionally, energy-dependent efflux pump responsible for decreased drug accumulation in multidrug resistance parasites. In Entamoeba histolytica (strain ATCC 30459 / HM-1:IMSS / ABRM), this protein is Multidrug resistance protein 4.